The primary structure comprises 177 residues: Adenine phosphoribosyltransferase (177 aa).

Belongs to the purine/pyrimidine phosphoribosyltransferase family. As to quaternary structure, homodimer.

The protein localises to the cytoplasm. It catalyses the reaction AMP + diphosphate = 5-phospho-alpha-D-ribose 1-diphosphate + adenine. It functions in the pathway purine metabolism; AMP biosynthesis via salvage pathway; AMP from adenine: step 1/1. Functionally, catalyzes a salvage reaction resulting in the formation of AMP, that is energically less costly than de novo synthesis. This chain is Adenine phosphoribosyltransferase, found in Rhodococcus opacus (strain B4).